Consider the following 150-residue polypeptide: Large ribosomal subunit protein uL13 (150 aa).

The segment at 127–150 (KGTEHPHSAQKPQPLQLNPSATAK) is disordered. The span at 136-150 (QKPQPLQLNPSATAK) shows a compositional bias: polar residues.

Belongs to the universal ribosomal protein uL13 family. Part of the 50S ribosomal subunit.

In terms of biological role, this protein is one of the early assembly proteins of the 50S ribosomal subunit, although it is not seen to bind rRNA by itself. It is important during the early stages of 50S assembly. This chain is Large ribosomal subunit protein uL13, found in Synechococcus sp. (strain CC9902).